The chain runs to 429 residues: Adenylosuccinate synthetase (429 aa).

GTP contacts are provided by residues 12–18 and 40–42; these read GDEGKGK and GHT. D13 acts as the Proton acceptor in catalysis. Positions 13 and 40 each coordinate Mg(2+). IMP contacts are provided by residues 13-16, 38-41, T128, R142, Q223, T238, and R302; these read DEGK and NAGH. Catalysis depends on H41, which acts as the Proton donor. Residue 298 to 304 coordinates substrate; it reads TVTKRPR. GTP contacts are provided by residues R304, 330-332, and 412-414; these read CLD and SVG.

Belongs to the adenylosuccinate synthetase family. In terms of assembly, homodimer. Mg(2+) serves as cofactor.

It localises to the cytoplasm. It catalyses the reaction IMP + L-aspartate + GTP = N(6)-(1,2-dicarboxyethyl)-AMP + GDP + phosphate + 2 H(+). Its pathway is purine metabolism; AMP biosynthesis via de novo pathway; AMP from IMP: step 1/2. Its function is as follows. Plays an important role in the de novo pathway of purine nucleotide biosynthesis. Catalyzes the first committed step in the biosynthesis of AMP from IMP. This chain is Adenylosuccinate synthetase, found in Lactiplantibacillus plantarum (strain ATCC BAA-793 / NCIMB 8826 / WCFS1) (Lactobacillus plantarum).